Reading from the N-terminus, the 1314-residue chain is E3 ubiquitin-protein ligase RNF123 (1314 aa).

Alanine 2 is subject to N-acetylalanine. Positions 74-254 constitute a B30.2/SPRY domain; it reads VDNEEEESQG…VAFNFGSRPL (181 aa). Phosphoserine is present on serine 675. Position 683 is an asymmetric dimethylarginine (arginine 683). The segment at 968–974 is interaction with NFKB1; it reads WILVRLW. Residues cysteine 1254, cysteine 1257, cysteine 1269, histidine 1271, cysteine 1274, cysteine 1277, cysteine 1288, and cysteine 1291 each coordinate Zn(2+). The RING-type zinc-finger motif lies at 1254–1292; that stretch reads CPICYAHPISAVFQPCGHKSCKACINQHLMNNKDCFFCK.

As to quaternary structure, component of the KPC complex composed of RNF123/KPC1 and UBAC1/KPC2. Interacts with UBAC1 and CDKN1B via its N-terminal domain. Interacts with RIGI (via N-terminus) and IFIH1 (via N-terminus). Ubiquitinated, leading to its degradation. Deubiquitinated by USP19, thereby stimulating CDKN1B ubiquitin-dependent degradation.

The protein localises to the cytoplasm. The enzyme catalyses S-ubiquitinyl-[E2 ubiquitin-conjugating enzyme]-L-cysteine + [acceptor protein]-L-lysine = [E2 ubiquitin-conjugating enzyme]-L-cysteine + N(6)-ubiquitinyl-[acceptor protein]-L-lysine.. It participates in protein modification; protein ubiquitination. Functionally, catalytic subunit of the KPC complex that acts as E3 ubiquitin-protein ligase. Promotes the ubiquitination and proteasome-mediated degradation of CDKN1B which is the cyclin-dependent kinase inhibitor at the G0-G1 transition of the cell cycle. Also acts as a key regulator of the NF-kappa-B signaling by promoting maturation of the NFKB1 component of NF-kappa-B: acts by catalyzing ubiquitination of the NFKB1 p105 precursor, leading to limited proteasomal degradation of NFKB1 p105 and generation of the active NFKB1 p50 subunit. Also functions as an inhibitor of innate antiviral signaling mediated by RIGI and IFIH1 independently of its E3 ligase activity. Interacts with the N-terminal CARD domains of RIGI and IFIH1 and competes with the downstream adapter MAVS. In Homo sapiens (Human), this protein is E3 ubiquitin-protein ligase RNF123.